A 157-amino-acid chain; its full sequence is Transmembrane protein 42 (157 aa).

4 consecutive transmembrane segments (helical) span residues 37 to 57 (FWGVFNCLCAGAFGALAAAAA), 67 to 87 (IGLCVLGIVAMASANSLMWTF), 100 to 120 (IASVTVTFSNILCSAILGYLL), and 124 to 144 (CQEILWWGGVFLILCGLTLIH).

The protein resides in the membrane. The chain is Transmembrane protein 42 (Tmem42) from Mus musculus (Mouse).